The following is a 1192-amino-acid chain: Probable ATP-dependent RNA helicase kurz (1192 aa).

A disordered region spans residues 170-214; it reads ELQAKRKNPNVISVEEDDEDSSSSDEDDEEAPAQSAPIAIPTPVS. The span at 183-200 shows a compositional bias: acidic residues; sequence VEEDDEDSSSSDEDDEEA. The Helicase ATP-binding domain occupies 270 to 436; that stretch reads METINENPIV…TRLFKIPPPL (167 aa). 283-290 provides a ligand contact to ATP; sequence GETGSGKT. A DEAH box motif is present at residues 379–382; that stretch reads DEAH. The tract at residues 504-529 is disordered; sequence APTKDVAKNGKVSEEEKEETIDDAAS. Residues 505–517 are compositionally biased toward basic and acidic residues; it reads PTKDVAKNGKVSE. Position 529 is a phosphoserine (S529). T530 is modified (phosphothreonine). One can recognise a Helicase C-terminal domain in the interval 540–746; it reads DMKRVIRNIR…DLMLQMRCMG (207 aa). Basic and acidic residues predominate over residues 567–583; that stretch reads DDYKLPGDDTEADMHEQ. Residues 567–612 form a disordered region; it reads DDYKLPGDDTEADMHEQPDEDDEQEGLEEDNDDELGLEDESGMGSG. The segment covering 584 to 607 has biased composition (acidic residues); that stretch reads PDEDDEQEGLEEDNDDELGLEDES.

The protein belongs to the DEAD box helicase family. DEAH subfamily.

The enzyme catalyses ATP + H2O = ADP + phosphate + H(+). In Drosophila melanogaster (Fruit fly), this protein is Probable ATP-dependent RNA helicase kurz (kz).